Consider the following 298-residue polypeptide: Glycine--tRNA ligase alpha subunit (298 aa).

Belongs to the class-II aminoacyl-tRNA synthetase family. As to quaternary structure, tetramer of two alpha and two beta subunits.

The protein resides in the cytoplasm. It carries out the reaction tRNA(Gly) + glycine + ATP = glycyl-tRNA(Gly) + AMP + diphosphate. This Neisseria meningitidis serogroup C / serotype 2a (strain ATCC 700532 / DSM 15464 / FAM18) protein is Glycine--tRNA ligase alpha subunit.